The chain runs to 375 residues: 23S rRNA (uracil(747)-C(5))-methyltransferase RlmC (375 aa).

[4Fe-4S] cluster-binding residues include cysteine 3, cysteine 11, cysteine 14, and cysteine 87. S-adenosyl-L-methionine-binding residues include glutamine 212, phenylalanine 241, glutamate 262, and asparagine 307. Catalysis depends on cysteine 334, which acts as the Nucleophile.

This sequence belongs to the class I-like SAM-binding methyltransferase superfamily. RNA M5U methyltransferase family. RlmC subfamily.

The enzyme catalyses uridine(747) in 23S rRNA + S-adenosyl-L-methionine = 5-methyluridine(747) in 23S rRNA + S-adenosyl-L-homocysteine + H(+). Functionally, catalyzes the formation of 5-methyl-uridine at position 747 (m5U747) in 23S rRNA. In Escherichia coli O6:H1 (strain CFT073 / ATCC 700928 / UPEC), this protein is 23S rRNA (uracil(747)-C(5))-methyltransferase RlmC.